The primary structure comprises 239 residues: Putative antitoxin VapB45 (239 aa).

In terms of biological role, possibly the antitoxin component of a type II toxin-antitoxin (TA) system. Its cognate toxin is VapC45. The chain is Putative antitoxin VapB45 from Mycobacterium tuberculosis (strain ATCC 25618 / H37Rv).